Here is a 683-residue protein sequence, read N- to C-terminus: U4/U6 small nuclear ribonucleoprotein Prp3 (683 aa).

The PWI domain maps to 1–87; it reads MALSKRELDE…HSKSSSDRSR (87 aa). The segment covering 73-107 has biased composition (basic and acidic residues); the sequence is GRSSRHSKSSSDRSRKRELKEVFGDDSEISKESSG. The interval 73 to 135 is disordered; the sequence is GRSSRHSKSS…IPGPPSESPG (63 aa). K139 is covalently cross-linked (Glycyl lysine isopeptide (Lys-Gly) (interchain with G-Cter in SUMO2)). Residues 153–183 form a disordered region; that stretch reads IEERKKQLSFISPPTPQPKTPSSSQPERLPI. Phosphoserine is present on S164. T167 is subject to Phosphothreonine. Residues K244 and K252 each participate in a glycyl lysine isopeptide (Lys-Gly) (interchain with G-Cter in SUMO2) cross-link. The segment at 416-550 is mediates interaction with SART3; the sequence is NLVEHPAQLN…VHISVYRVRN (135 aa). S619 bears the Phosphoserine mark.

Component of the precatalytic spliceosome (spliceosome B complex). Component of the U4/U6-U5 tri-snRNP complex, a building block of the precatalytic spliceosome (spliceosome B complex). The U4/U6-U5 tri-snRNP complex is composed of the U4, U6 and U5 snRNAs and at least PRPF3, PRPF4, PRPF6, PRPF8, PRPF31, SNRNP200, TXNL4A, SNRNP40, SNRPB, SNRPD1, SNRPD2, SNRPD3, SNRPE, SNRPF, SNRPG, DDX23, CD2BP2, PPIH, SNU13, EFTUD2, SART1 and USP39, plus LSM2, LSM3, LSM4, LSM5, LSM6, LSM7 and LSM8. Interacts directly with PRPF4. Part of a heteromeric complex containing PPIH, PRPF3 and PRPF4 that is stable in the absence of RNA. Interacts with SART3; the interaction is direct and recruits the deubiquitinase USP4 to PRPF3. Interacts with PRPF19. Interacts ('Lys-63'-linked polyubiquitinated) with PRPF8 (via the MPN (JAB/Mov34) domain); may stabilize the U4/U6-U5 tri-snRNP complex. Interacts with ERCC6. Post-translationally, ubiquitinated. Undergoes 'Lys-63'-linked polyubiquitination by PRPF19 and deubiquitination by USP4. 'Lys-63'-linked ubiquitination increases the affinity for PRPF8 and may regulate the assembly of the U4/U6-U5 tri-snRNP complex.

The protein localises to the nucleus. It localises to the nucleus speckle. In terms of biological role, plays a role in pre-mRNA splicing as component of the U4/U6-U5 tri-snRNP complex that is involved in spliceosome assembly, and as component of the precatalytic spliceosome (spliceosome B complex). In Pongo abelii (Sumatran orangutan), this protein is U4/U6 small nuclear ribonucleoprotein Prp3 (PRPF3).